A 484-amino-acid chain; its full sequence is Ureidoglycolate hydrolase (484 aa).

The first 28 residues, 1–28 (MATSAAARFLAALAGAAVLLVLLGGAAG), serve as a signal peptide directing secretion. Residues histidine 148, aspartate 159, glutamate 194, and histidine 262 each coordinate Mn(2+). Substrate stretches follow at residues 193–194 (EE) and 262–265 (HIEQ). Residues 284 to 399 (APASIKVEFE…LSEFKIINQD (116 aa)) form an involved in dimerization region. Positions 298, 348, and 361 each coordinate substrate. Residues 431-432 (YH) form a substrate region. Mn(2+) is bound at residue histidine 456. A substrate-binding site is contributed by histidine 456.

The protein belongs to the peptidase M20 family. As to quaternary structure, homodimer. It depends on Mn(2+) as a cofactor. The cofactor is Ni(2+). Co(2+) is required as a cofactor.

The protein localises to the endoplasmic reticulum. It catalyses the reaction (S)-ureidoglycolate + H2O + 2 H(+) = glyoxylate + 2 NH4(+) + CO2. It participates in nitrogen metabolism; (S)-allantoin degradation; glyoxylate from (S)-ureidoglycolate: step 1/1. Its function is as follows. Involved in the catabolism of purine nucleotides. The sequential activity of AAH, UGLYAH and UAH allows a complete purine breakdown without the intermediate generation of urea. The chain is Ureidoglycolate hydrolase from Oryza sativa subsp. japonica (Rice).